A 382-amino-acid chain; its full sequence is Probable purine permease 4 (382 aa).

A run of 10 helical transmembrane segments spans residues 25–45 (LTLL…SSLL), 62–82 (WVQS…HYVL), 98–118 (LIFS…FSWG), 121–141 (YLPV…TLIL), 150–170 (ITFS…LLAL), 185–205 (YFIG…YLPV), 224–244 (LVME…EGGF), 260–280 (TFYW…SFAA), 291–311 (ITGG…GVVA), and 315–335 (VFGG…SSYT). The region spanning 66-170 (AGFPLLLILI…LTLSSVLLAL (105 aa)) is the EamA domain. The disordered stretch occupies residues 345 to 364 (EEKEKGEYSGVKTTEDSGEM).

The protein belongs to the purine permeases (TC 2.A.7.14) family.

It is found in the membrane. This is Probable purine permease 4 (PUP4) from Arabidopsis thaliana (Mouse-ear cress).